Here is a 160-residue protein sequence, read N- to C-terminus: 6,7-dimethyl-8-ribityllumazine synthase (160 aa).

Residues F22, 57–59 (TYE), and 81–83 (TII) contribute to the 5-amino-6-(D-ribitylamino)uracil site. 86 to 87 (QT) serves as a coordination point for (2S)-2-hydroxy-3-oxobutyl phosphate. H89 serves as the catalytic Proton donor. L114 lines the 5-amino-6-(D-ribitylamino)uracil pocket. R128 contacts (2S)-2-hydroxy-3-oxobutyl phosphate.

The protein belongs to the DMRL synthase family. As to quaternary structure, forms an icosahedral capsid composed of 60 subunits, arranged as a dodecamer of pentamers.

The enzyme catalyses (2S)-2-hydroxy-3-oxobutyl phosphate + 5-amino-6-(D-ribitylamino)uracil = 6,7-dimethyl-8-(1-D-ribityl)lumazine + phosphate + 2 H2O + H(+). It functions in the pathway cofactor biosynthesis; riboflavin biosynthesis; riboflavin from 2-hydroxy-3-oxobutyl phosphate and 5-amino-6-(D-ribitylamino)uracil: step 1/2. Catalyzes the formation of 6,7-dimethyl-8-ribityllumazine by condensation of 5-amino-6-(D-ribitylamino)uracil with 3,4-dihydroxy-2-butanone 4-phosphate. This is the penultimate step in the biosynthesis of riboflavin. The polypeptide is 6,7-dimethyl-8-ribityllumazine synthase (Buchnera aphidicola subsp. Acyrthosiphon pisum (strain APS) (Acyrthosiphon pisum symbiotic bacterium)).